Consider the following 333-residue polypeptide: MSRPRFLPDNFTLALIATVLLATFLPCSGQTAVVFEWVTNIGIGLLFFLHGAKLSRQAIIAGMTHWRLHLLVFACTFVMFPLLGLALKPALSPMVTPELYLGILFLCALPATVQSSIAFTSLARGNVPAAVCSASVSSLLGVFLTPLLVKLLLGAEGETGNALDAIGKITLQLLVPFIAGQVLRRWIGAWVERNKPVLRYVDQGSILLVVYTAFSAAVIQGLWHEVPWLALLGLTVACCVILALALVLTTVLARRLGFSKEDEITIVFCGSKKSLATGVPMAKVLFATSAVGPMVLPLMLFHQIQLMVCAVLAQRYARRRDDAAAALAEAPSR.

This sequence to E.coli YfeH.

This is an uncharacterized protein from Pseudomonas aeruginosa (strain ATCC 15692 / DSM 22644 / CIP 104116 / JCM 14847 / LMG 12228 / 1C / PRS 101 / PAO1).